The primary structure comprises 109 residues: Small ribosomal subunit protein bS6 (109 aa).

Belongs to the bacterial ribosomal protein bS6 family.

Functionally, binds together with bS18 to 16S ribosomal RNA. The sequence is that of Small ribosomal subunit protein bS6 from Anaplasma phagocytophilum (strain HZ).